Here is a 143-residue protein sequence, read N- to C-terminus: S-adenosylmethionine decarboxylase proenzyme (143 aa).

The active-site Schiff-base intermediate with substrate; via pyruvic acid is the Ser-66. Ser-66 is subject to Pyruvic acid (Ser); by autocatalysis. Catalysis depends on His-71, which acts as the Proton acceptor; for processing activity. Cys-86 functions as the Proton donor; for catalytic activity in the catalytic mechanism.

The protein belongs to the prokaryotic AdoMetDC family. Type 1 subfamily. In terms of assembly, heterotetramer of two alpha and two beta chains arranged as a dimer of alpha/beta heterodimers. Pyruvate serves as cofactor. In terms of processing, is synthesized initially as an inactive proenzyme. Formation of the active enzyme involves a self-maturation process in which the active site pyruvoyl group is generated from an internal serine residue via an autocatalytic post-translational modification. Two non-identical subunits are generated from the proenzyme in this reaction, and the pyruvate is formed at the N-terminus of the alpha chain, which is derived from the carboxyl end of the proenzyme. The post-translation cleavage follows an unusual pathway, termed non-hydrolytic serinolysis, in which the side chain hydroxyl group of the serine supplies its oxygen atom to form the C-terminus of the beta chain, while the remainder of the serine residue undergoes an oxidative deamination to produce ammonia and the pyruvoyl group blocking the N-terminus of the alpha chain.

It carries out the reaction S-adenosyl-L-methionine + H(+) = S-adenosyl 3-(methylsulfanyl)propylamine + CO2. The protein operates within amine and polyamine biosynthesis; S-adenosylmethioninamine biosynthesis; S-adenosylmethioninamine from S-adenosyl-L-methionine: step 1/1. In terms of biological role, catalyzes the decarboxylation of S-adenosylmethionine to S-adenosylmethioninamine (dcAdoMet), the propylamine donor required for the synthesis of the polyamines spermine and spermidine from the diamine putrescine. The protein is S-adenosylmethionine decarboxylase proenzyme of Thermococcus gammatolerans (strain DSM 15229 / JCM 11827 / EJ3).